The sequence spans 207 residues: Outer-membrane lipoprotein LolB (207 aa).

The first 26 residues, 1-26 (MSKLKIDTKRRFSLLIALVLIISLSS), serve as a signal peptide directing secretion. A lipid anchor (N-palmitoyl cysteine) is attached at cysteine 27. Cysteine 27 carries S-diacylglycerol cysteine lipidation.

This sequence belongs to the LolB family. As to quaternary structure, monomer.

Its subcellular location is the cell outer membrane. Functionally, plays a critical role in the incorporation of lipoproteins in the outer membrane after they are released by the LolA protein. The chain is Outer-membrane lipoprotein LolB from Francisella tularensis subsp. tularensis (strain FSC 198).